The sequence spans 379 residues: Dual-specificity RNA methyltransferase RlmN (379 aa).

The Proton acceptor role is filled by Glu95. One can recognise a Radical SAM core domain in the interval 101 to 345 (EETRGTLCVS…TTVRKTRGDD (245 aa)). Cys108 and Cys350 are disulfide-bonded. [4Fe-4S] cluster is bound by residues Cys115, Cys119, and Cys122. S-adenosyl-L-methionine-binding positions include 176–177 (GE), Ser208, 230–232 (SLH), and Asn307. Cys350 acts as the S-methylcysteine intermediate in catalysis.

Belongs to the radical SAM superfamily. RlmN family. Requires [4Fe-4S] cluster as cofactor.

Its subcellular location is the cytoplasm. The enzyme catalyses adenosine(2503) in 23S rRNA + 2 reduced [2Fe-2S]-[ferredoxin] + 2 S-adenosyl-L-methionine = 2-methyladenosine(2503) in 23S rRNA + 5'-deoxyadenosine + L-methionine + 2 oxidized [2Fe-2S]-[ferredoxin] + S-adenosyl-L-homocysteine. It carries out the reaction adenosine(37) in tRNA + 2 reduced [2Fe-2S]-[ferredoxin] + 2 S-adenosyl-L-methionine = 2-methyladenosine(37) in tRNA + 5'-deoxyadenosine + L-methionine + 2 oxidized [2Fe-2S]-[ferredoxin] + S-adenosyl-L-homocysteine. Functionally, specifically methylates position 2 of adenine 2503 in 23S rRNA and position 2 of adenine 37 in tRNAs. m2A2503 modification seems to play a crucial role in the proofreading step occurring at the peptidyl transferase center and thus would serve to optimize ribosomal fidelity. This chain is Dual-specificity RNA methyltransferase RlmN, found in Burkholderia ambifaria (strain MC40-6).